The chain runs to 448 residues: Phosphoglucosamine mutase (448 aa).

S99 acts as the Phosphoserine intermediate in catalysis. Mg(2+) is bound by residues S99, D238, D240, and D242. At S99 the chain carries Phosphoserine.

The protein belongs to the phosphohexose mutase family. Mg(2+) is required as a cofactor. Activated by phosphorylation.

It carries out the reaction alpha-D-glucosamine 1-phosphate = D-glucosamine 6-phosphate. Functionally, catalyzes the conversion of glucosamine-6-phosphate to glucosamine-1-phosphate. The sequence is that of Phosphoglucosamine mutase from Marinomonas sp. (strain MWYL1).